The following is a 367-amino-acid chain: Probable dual-specificity RNA methyltransferase RlmN (367 aa).

Catalysis depends on glutamate 92, which acts as the Proton acceptor. Residues 98-326 (QEYGLSVCVT…YDTLKKNGIN (229 aa)) form the Radical SAM core domain. A disulfide bridge connects residues cysteine 105 and cysteine 341. The [4Fe-4S] cluster site is built by cysteine 112, cysteine 116, and cysteine 119. Residues 164 to 165 (GE), serine 196, 219 to 221 (SLH), and asparagine 297 contribute to the S-adenosyl-L-methionine site. Cysteine 341 (S-methylcysteine intermediate) is an active-site residue.

This sequence belongs to the radical SAM superfamily. RlmN family. The cofactor is [4Fe-4S] cluster.

Its subcellular location is the cytoplasm. It carries out the reaction adenosine(2503) in 23S rRNA + 2 reduced [2Fe-2S]-[ferredoxin] + 2 S-adenosyl-L-methionine = 2-methyladenosine(2503) in 23S rRNA + 5'-deoxyadenosine + L-methionine + 2 oxidized [2Fe-2S]-[ferredoxin] + S-adenosyl-L-homocysteine. It catalyses the reaction adenosine(37) in tRNA + 2 reduced [2Fe-2S]-[ferredoxin] + 2 S-adenosyl-L-methionine = 2-methyladenosine(37) in tRNA + 5'-deoxyadenosine + L-methionine + 2 oxidized [2Fe-2S]-[ferredoxin] + S-adenosyl-L-homocysteine. Functionally, specifically methylates position 2 of adenine 2503 in 23S rRNA and position 2 of adenine 37 in tRNAs. This Listeria innocua serovar 6a (strain ATCC BAA-680 / CLIP 11262) protein is Probable dual-specificity RNA methyltransferase RlmN.